The primary structure comprises 371 residues: MSPSDLYVILQQRIFGMLIDAIKGVRPRLTDLKAEEMVEWRLKALVQMGALTQQVIDYVKKQSPAIAKAVDDVIKKDGLKVGQSFNKDLAKVLNQTPKPVSTETTQLLDSYAAQTWKSLDNNVNQSLLSTNAGKNPALRVYQDIINKSTLAVTTGLKTPQEAIFDNIDDWVKTGLPTTLIDKGGHKWSLEGYTRTVITTTTLRTYNDVRMQSLKDYSQTLAIMTSHPAARHACAPIQGKVVNTVDHGDPRFNPKYPTIYDYGYGTPAGTLGINCMHQLYPYVEGVTINRQKHYDEQEAIKNGQIQQMQRYYERQVRKWKQRKDAAERIGNTNLAAKCNSAIRGYQAKIRQLVNENDFLTRQYDRESTWVSR.

2 N-linked (GlcNAc...) asparagine; by host glycosylation sites follow: Asn-124 and Asn-146. Positions Lys-336–Thr-367 form a coiled coil.

It belongs to the Lactobacillus delbrueckii bacteriophages ORF1 protein family.

It is found in the virion. This is Structural protein from Lactobacillus delbrueckii (Lactococcus delbrueckii bacteriophage LL-H).